The primary structure comprises 425 residues: Formyl-CoA:oxalate CoA-transferase (425 aa).

CoA-binding positions include 17-18, arginine 38, 72-75, 96-98, arginine 104, and 136-139; these read QS, LDTK, NFG, and KVYE. The active-site Nucleophile is the aspartate 168. 247 to 249 lines the substrate pocket; the sequence is GGQ.

Belongs to the CoA-transferase III family. Frc subfamily. In terms of assembly, homodimer.

It catalyses the reaction formyl-CoA + oxalate = oxalyl-CoA + formate. The protein operates within metabolic intermediate degradation; oxalate degradation; CO(2) and formate from oxalate: step 1/2. In terms of biological role, involved in the catabolism of oxalate and in the adapatation to low pH via the induction of the oxalate-dependent acid tolerance response (ATR). Catalyzes the transfer of the CoA moiety from formyl-CoA to oxalate. The protein is Formyl-CoA:oxalate CoA-transferase of Bradyrhizobium sp. (strain ORS 278).